The chain runs to 434 residues: Alpha-enolase (434 aa).

Residue S40 coordinates Mg(2+). Substrate contacts are provided by H158 and E167. E210 acts as the Proton donor in catalysis. Mg(2+) is bound by residues D245, E293, and D318. Substrate is bound by residues E293 and D318. K343 serves as the catalytic Proton acceptor. Residues 370–373 (SHRS) and K394 contribute to the substrate site.

Belongs to the enolase family. In terms of assembly, homodimer. Mg(2+) is required as a cofactor.

The protein resides in the cytoplasm. It catalyses the reaction (2R)-2-phosphoglycerate = phosphoenolpyruvate + H2O. It functions in the pathway carbohydrate degradation; glycolysis; pyruvate from D-glyceraldehyde 3-phosphate: step 4/5. This Sceloporus undulatus (Eastern fence lizard) protein is Alpha-enolase.